The following is a 491-amino-acid chain: Ketol-acid reductoisomerase (NADP(+)) (491 aa).

The KARI N-terminal Rossmann domain maps to 15 to 208 (AQLGKCRFMA…GGHRAGVLES (194 aa)). Residues 45–48 (CGAQ), arginine 68, arginine 76, serine 78, and 108–110 (DKQ) contribute to the NADP(+) site. The active site involves histidine 132. Glycine 158 lines the NADP(+) pocket. 2 KARI C-terminal knotted domains span residues 209–344 (SFVA…NAPQ) and 345–484 (FEGK…MTDM). 4 residues coordinate Mg(2+): aspartate 217, glutamate 221, glutamate 389, and glutamate 393. Residue serine 414 participates in substrate binding.

This sequence belongs to the ketol-acid reductoisomerase family. Requires Mg(2+) as cofactor.

It carries out the reaction (2R)-2,3-dihydroxy-3-methylbutanoate + NADP(+) = (2S)-2-acetolactate + NADPH + H(+). It catalyses the reaction (2R,3R)-2,3-dihydroxy-3-methylpentanoate + NADP(+) = (S)-2-ethyl-2-hydroxy-3-oxobutanoate + NADPH + H(+). It functions in the pathway amino-acid biosynthesis; L-isoleucine biosynthesis; L-isoleucine from 2-oxobutanoate: step 2/4. Its pathway is amino-acid biosynthesis; L-valine biosynthesis; L-valine from pyruvate: step 2/4. Functionally, involved in the biosynthesis of branched-chain amino acids (BCAA). Catalyzes an alkyl-migration followed by a ketol-acid reduction of (S)-2-acetolactate (S2AL) to yield (R)-2,3-dihydroxy-isovalerate. In the isomerase reaction, S2AL is rearranged via a Mg-dependent methyl migration to produce 3-hydroxy-3-methyl-2-ketobutyrate (HMKB). In the reductase reaction, this 2-ketoacid undergoes a metal-dependent reduction by NADPH to yield (R)-2,3-dihydroxy-isovalerate. This Serratia proteamaculans (strain 568) protein is Ketol-acid reductoisomerase (NADP(+)).